Here is a 666-residue protein sequence, read N- to C-terminus: Amyloid beta A4 precursor protein-binding family B member 1-interacting protein (666 aa).

Serine 55 is modified (phosphoserine). The segment at 122–155 (SQYEDDLPPPPADPVLDLPLPPPPPEPLSQEEEE) is disordered. Over residues 129-148 (PPPPADPVLDLPLPPPPPEP) the composition is skewed to pro residues. The 88-residue stretch at 176–263 (KKLVVKVHMN…KILFLEKEEK (88 aa)) folds into the Ras-associating domain. The PH domain occupies 310-419 (VPELEGALYL…WVMGIRIAKY (110 aa)). Positions 448 to 666 (AAAPAQPSTG…ALQKKRGNVS (219 aa)) are disordered. The span at 453–478 (QPSTGPKTGTTQPNGQIPQATHSVSA) shows a compositional bias: polar residues. The segment covering 483–504 (AQRHAETSKDKKPALGNHHDPA) has biased composition (basic and acidic residues). Serine 526 carries the phosphoserine modification. The residue at position 528 (threonine 528) is a Phosphothreonine. Serine 531 carries the post-translational modification Phosphoserine. Composition is skewed to pro residues over residues 547-589 (PAPP…PPPS) and 598-631 (LPPP…PVPP).

Belongs to the MRL family. As to quaternary structure, interacts, through the N-terminal Pro-rich region, with the WW domain of APBB1. Interacts with RAP1A, PFN1, TLN1, VASP, VCL and ENAH. In terms of tissue distribution, widely expressed with high expression in thymus, spleen, lymph node, bone marrow and peripheral leukocytes.

The protein resides in the cell membrane. The protein localises to the cell projection. Its subcellular location is the lamellipodium. It localises to the cell junction. It is found in the focal adhesion. The protein resides in the cytoplasm. The protein localises to the cytoskeleton. Functionally, appears to function in the signal transduction from Ras activation to actin cytoskeletal remodeling. Suppresses insulin-induced promoter activities through AP1 and SRE. Mediates Rap1-induced adhesion. In Homo sapiens (Human), this protein is Amyloid beta A4 precursor protein-binding family B member 1-interacting protein (APBB1IP).